A 74-amino-acid polypeptide reads, in one-letter code: MEIKYLLTVFLVLLIGSDYCQAFLFSLIPHAIGGLISAFKGRRKRDLDGQIDRSRNFRKRDAELEELLSKLPIY.

The signal sequence occupies residues M1 to A22. K40 carries the lysine amide modification. Positions D46–Y74 are excised as a propeptide.

As to expression, expressed by the venom gland.

The protein localises to the secreted. It is found in the target cell membrane. In terms of biological role, has antibacterial activity against the Gram-positive bacteria S.aureus (MIC=20 uM), the Gram-negative bacteria E.coli (MIC=150 uM), and the yeast C.albicans (MIC=64 uM). Causes hemolysis on horse erythrocytes. The chain is Antimicrobial peptide 1 from Androctonus amoreuxi (African fattail scorpion).